We begin with the raw amino-acid sequence, 85 residues long: Small ribosomal subunit protein uS17 (85 aa).

The protein belongs to the universal ribosomal protein uS17 family. Part of the 30S ribosomal subunit.

Its function is as follows. One of the primary rRNA binding proteins, it binds specifically to the 5'-end of 16S ribosomal RNA. The chain is Small ribosomal subunit protein uS17 from Lachnoclostridium phytofermentans (strain ATCC 700394 / DSM 18823 / ISDg) (Clostridium phytofermentans).